The primary structure comprises 128 residues: MGFLKFSPFLVVSILLLYQACSLQAVPLRSILESSPGMATLSEEEVRLLAALVQDYMQMKARELEQEEEQEAEGSSVTAQKRSCNTATCVTHRLAGLLSRSGGVVKDNFVPTNVGSEAFGRRRRDLQA.

The N-terminal stretch at 1 to 25 (MGFLKFSPFLVVSILLLYQACSLQA) is a signal peptide. A propeptide spanning residues 26 to 80 (VPLRSILESSPGMATLSEEEVRLLAALVQDYMQMKARELEQEEEQEAEGSSVTAQ) is cleaved from the precursor. C84 and C89 are oxidised to a cystine. Position 119 is a phenylalanine amide (F119). Positions 125 to 128 (DLQA) are excised as a propeptide.

The protein belongs to the calcitonin family. As to expression, detected in nerve cells of cerebrum, hippocampus and pons/midbrain in newborns, and only in nerve cells of pons/midbrain in adult.

The protein localises to the secreted. In terms of biological role, CGRP1/CALCA is a peptide hormone that induces vasodilation mediated by the CALCRL-RAMP1 receptor complex. Dilates a variety of vessels including the coronary, cerebral and systemic vasculature. Its abundance in the CNS also points toward a neurotransmitter or neuromodulator role. It also elevates platelet cAMP. CGRP1 can also bind and activate CALCR-RAMP1 (AMYR1) receptor complex. The chain is Calcitonin gene-related peptide 1 from Mus musculus (Mouse).